Reading from the N-terminus, the 361-residue chain is MSVRRVVILGSTGSIGMQALEVVAANPDRFQVVGLTAGSSAGQLAEQAERFGVRETALGAGDSERLVRSVDADVVLNGITGSVGLGPTLAALESGRTLALANKESLIVGGELVKRAAAPGQLIPVDSEHSALAQALRSGAAGEVSRLVLTASGGPFRGRSRESLRQVTPAEALAHPTWDMGLVVTTNSSTLVNKGLEVIEAHLLFGVPYDRIEVTVHPQSVVHSMVEFVDGSTIAQASPPDMRLPISLGLGWPDRVPGTGLPLDWTRAHTWTFEPLDGEAFPAVALAKCVGVAGGTYPAVFNAANEQAVAAFHAGAIGYLDIVDTVERVVDAHEPQAELTREGLAEAEGWARSAADRMLGR.

NADPH is bound by residues T12, G13, S14, I15, G38, and N102. Position 103 (K103) interacts with 1-deoxy-D-xylulose 5-phosphate. An NADPH-binding site is contributed by E104. D126 lines the Mn(2+) pocket. Positions 127, 128, 152, and 175 each coordinate 1-deoxy-D-xylulose 5-phosphate. E128 serves as a coordination point for Mn(2+). G181 serves as a coordination point for NADPH. 1-deoxy-D-xylulose 5-phosphate contacts are provided by S188, N193, K194, and E197. Residue E197 participates in Mn(2+) binding.

This sequence belongs to the DXR family. Mg(2+) serves as cofactor. The cofactor is Mn(2+).

It catalyses the reaction 2-C-methyl-D-erythritol 4-phosphate + NADP(+) = 1-deoxy-D-xylulose 5-phosphate + NADPH + H(+). The protein operates within isoprenoid biosynthesis; isopentenyl diphosphate biosynthesis via DXP pathway; isopentenyl diphosphate from 1-deoxy-D-xylulose 5-phosphate: step 1/6. In terms of biological role, catalyzes the NADPH-dependent rearrangement and reduction of 1-deoxy-D-xylulose-5-phosphate (DXP) to 2-C-methyl-D-erythritol 4-phosphate (MEP). The chain is 1-deoxy-D-xylulose 5-phosphate reductoisomerase from Leifsonia xyli subsp. xyli (strain CTCB07).